Consider the following 217-residue polypeptide: Probable cutinase 3 (217 aa).

Residues 1 to 17 (MSLRSLFVAGLATLALA) form the signal peptide. Intrachain disulfides connect C39–C118 and C65–C79. S129 acts as the Nucleophile in catalysis. A disulfide bond links C180 and C187. The active site involves D184. H197 functions as the Proton donor/acceptor in the catalytic mechanism.

Belongs to the cutinase family.

The protein localises to the secreted. It catalyses the reaction cutin + H2O = cutin monomers.. Catalyzes the hydrolysis of complex carboxylic polyesters found in the cell wall of plants. Degrades cutin, a macromolecule that forms the structure of the plant cuticle. The chain is Probable cutinase 3 from Neosartorya fischeri (strain ATCC 1020 / DSM 3700 / CBS 544.65 / FGSC A1164 / JCM 1740 / NRRL 181 / WB 181) (Aspergillus fischerianus).